The chain runs to 265 residues: MEFLKRSFAPLTEKQWQEIDNRAREIFKTQLYGRKFVDVEGPYGWEYAAHPLGEVEVLSDENEVVKWGLRKSLPLIELRATFTLDLWELDNLERGKPNVDLSSLEETVRKVAEFEDEVIFRGCEKSGVKGLLSFEERKIECGSTPKDLLEAIVRALSIFSKDGIEGPYTLVINTDRWINFLKEEAGHYPLEKRVEECLRGGKIITTPRIEDALVVSERGGDFKLILGQDLSIGYEDREKDAVRLFITETFTFQVVNPEALILLKF.

FMN-binding positions include 79-81, tryptophan 87, and 90-94; these read RAT and DNLER. The interval 184–189 is pore-forming loop; the sequence is EAGHYP. Glutamate 235 contacts FMN.

Belongs to the encapsulin family. Family 1 subfamily. In terms of assembly, homomultimeric. This encapsulin nanocompartment is formed by 60 subunits; monomers form 12 pentamers which assemble to form shells. There are 12 pores where the pentamers meet as well as 3-fold axis channels and dimer channels; none are larger than 3-4 Angstroms in diameter. The N-terminus of the protein is inside the shell, the C-terminus is outside. Probably 3, 4 or 5 Flp cargo decamers bind inside the encapulin nanocompartment. FMN is required as a cofactor.

Its subcellular location is the encapsulin nanocompartment. With respect to regulation, proteolysis activated by calcium and cobalt. Shell component of a type 1 encapsulin nanocompartment. Assembles into proteinaceous shells 23-24 nm in diameter with 2-2.5 nm thick walls. Cargo protein Flp (ferritin-like protein, probably stores iron) is targeted to the interior via its C-terminal extension; empty intact shells can be isolated in the absence of cargo protein. Fe(2+) may be able to pass though the 5-fold and dimer channels in the protein shell. Its function is as follows. Protease that exhibits activity toward chymotrypsin and trypsin substrates. Probably does not have antibacterial activity. The protein is Type 1 encapsulin shell protein of Thermotoga maritima (strain ATCC 43589 / DSM 3109 / JCM 10099 / NBRC 100826 / MSB8).